The primary structure comprises 505 residues: Probable Xaa-Pro aminopeptidase Pc16g13390 (505 aa).

Mn(2+)-binding residues include Asp-287, Asp-298, Glu-436, and Glu-475.

The protein belongs to the peptidase M24B family. The cofactor is Mn(2+).

It catalyses the reaction Release of any N-terminal amino acid, including proline, that is linked to proline, even from a dipeptide or tripeptide.. Functionally, catalyzes the removal of a penultimate prolyl residue from the N-termini of peptides. The polypeptide is Probable Xaa-Pro aminopeptidase Pc16g13390 (Penicillium rubens (strain ATCC 28089 / DSM 1075 / NRRL 1951 / Wisconsin 54-1255) (Penicillium chrysogenum)).